Consider the following 496-residue polypeptide: Probable cytosol aminopeptidase (496 aa).

2 residues coordinate Mn(2+): K257 and D262. K269 is an active-site residue. Residues D281, D341, and E343 each coordinate Mn(2+). R345 is an active-site residue.

This sequence belongs to the peptidase M17 family. It depends on Mn(2+) as a cofactor.

The protein resides in the cytoplasm. It carries out the reaction Release of an N-terminal amino acid, Xaa-|-Yaa-, in which Xaa is preferably Leu, but may be other amino acids including Pro although not Arg or Lys, and Yaa may be Pro. Amino acid amides and methyl esters are also readily hydrolyzed, but rates on arylamides are exceedingly low.. It catalyses the reaction Release of an N-terminal amino acid, preferentially leucine, but not glutamic or aspartic acids.. Functionally, presumably involved in the processing and regular turnover of intracellular proteins. Catalyzes the removal of unsubstituted N-terminal amino acids from various peptides. The sequence is that of Probable cytosol aminopeptidase from Synechococcus sp. (strain CC9311).